A 220-amino-acid polypeptide reads, in one-letter code: Putative GED domain-containing protein DNM1P46 (220 aa).

Residues 18–46 (VSVETRNVKPQGKDSKAEENGSHSFMHSM) form a disordered region. Positions 28–38 (QGKDSKAEENG) are enriched in basic and acidic residues. One can recognise a GED domain in the interval 54–149 (METTQNLVDS…CCPTCTRLGT (96 aa)). The segment at 173–194 (DTPGGVGRAGTAARRDSRGNEK) is disordered. Residues 185-194 (ARRDSRGNEK) are compositionally biased toward basic and acidic residues.

The chain is Putative GED domain-containing protein DNM1P46 (DNM1P46) from Homo sapiens (Human).